A 347-amino-acid chain; its full sequence is ATPase GET3 (347 aa).

26 to 33 (KGGVGKTT) is a binding site for ATP. Asp-57 is an active-site residue. ATP-binding residues include Glu-240 and Asn-267. The Zn(2+) site is built by Cys-279 and Cys-282.

Belongs to the arsA ATPase family. As to quaternary structure, homodimer. Component of the Golgi to ER traffic (GET) complex, which is composed of GET1, GET2 and GET3. Within the complex, GET1 and GET2 form a heterotetramer which is stabilized by phosphatidylinositol binding and which binds to the GET3 homodimer. Interacts with the chloride channel protein GEF1.

Its subcellular location is the cytoplasm. It is found in the endoplasmic reticulum. The protein localises to the golgi apparatus. Its function is as follows. ATPase required for the post-translational delivery of tail-anchored (TA) proteins to the endoplasmic reticulum. Recognizes and selectively binds the transmembrane domain of TA proteins in the cytosol. This complex then targets to the endoplasmic reticulum by membrane-bound receptors GET1 and GET2, where the tail-anchored protein is released for insertion. This process is regulated by ATP binding and hydrolysis. ATP binding drives the homodimer towards the closed dimer state, facilitating recognition of newly synthesized TA membrane proteins. ATP hydrolysis is required for insertion. Subsequently, the homodimer reverts towards the open dimer state, lowering its affinity for the GET1-GET2 receptor, and returning it to the cytosol to initiate a new round of targeting. Cooperates with the HDEL receptor ERD2 to mediate the ATP-dependent retrieval of resident ER proteins that contain a C-terminal H-D-E-L retention signal from the Golgi to the ER. Involved in low-level resistance to the oxyanions arsenite and arsenate, and in heat tolerance. The chain is ATPase GET3 from Scheffersomyces stipitis (strain ATCC 58785 / CBS 6054 / NBRC 10063 / NRRL Y-11545) (Yeast).